A 563-amino-acid polypeptide reads, in one-letter code: Arginine--tRNA ligase (563 aa).

A 'HIGH' region motif is present at residues 121-131; it reads PNIAKPFSIGH.

It belongs to the class-I aminoacyl-tRNA synthetase family. Monomer.

The protein localises to the cytoplasm. The catalysed reaction is tRNA(Arg) + L-arginine + ATP = L-arginyl-tRNA(Arg) + AMP + diphosphate. This Streptococcus pyogenes serotype M12 (strain MGAS2096) protein is Arginine--tRNA ligase.